A 637-amino-acid chain; its full sequence is Phosphomethylpyrimidine synthase (637 aa).

Substrate is bound by residues N242, M271, Y300, H336, S356–G358, D397–R400, and E436. H440 contributes to the Zn(2+) binding site. Y463 serves as a coordination point for substrate. H504 is a binding site for Zn(2+). [4Fe-4S] cluster is bound by residues C584, C587, and C592.

The protein belongs to the ThiC family. In terms of assembly, homodimer. [4Fe-4S] cluster serves as cofactor.

It catalyses the reaction 5-amino-1-(5-phospho-beta-D-ribosyl)imidazole + S-adenosyl-L-methionine = 4-amino-2-methyl-5-(phosphooxymethyl)pyrimidine + CO + 5'-deoxyadenosine + formate + L-methionine + 3 H(+). It participates in cofactor biosynthesis; thiamine diphosphate biosynthesis. Catalyzes the synthesis of the hydroxymethylpyrimidine phosphate (HMP-P) moiety of thiamine from aminoimidazole ribotide (AIR) in a radical S-adenosyl-L-methionine (SAM)-dependent reaction. The sequence is that of Phosphomethylpyrimidine synthase from Janthinobacterium sp. (strain Marseille) (Minibacterium massiliensis).